A 194-amino-acid polypeptide reads, in one-letter code: Adenylate kinase (194 aa).

Residue G11 to T16 coordinates ATP. Residues S31–V60 form an NMP region. AMP-binding positions include T32, R37, H58–V60, G86–R89, and Q93. An LID region spans residues N127–D137. R128 is an ATP binding site. AMP contacts are provided by R134 and R145. G173 lines the ATP pocket.

It belongs to the adenylate kinase family. As to quaternary structure, monomer.

It is found in the cytoplasm. The catalysed reaction is AMP + ATP = 2 ADP. The protein operates within purine metabolism; AMP biosynthesis via salvage pathway; AMP from ADP: step 1/1. Its function is as follows. Catalyzes the reversible transfer of the terminal phosphate group between ATP and AMP. Plays an important role in cellular energy homeostasis and in adenine nucleotide metabolism. The polypeptide is Adenylate kinase (Porphyromonas gingivalis (strain ATCC 33277 / DSM 20709 / CIP 103683 / JCM 12257 / NCTC 11834 / 2561)).